Reading from the N-terminus, the 702-residue chain is Elongation factor G 2 (702 aa).

One can recognise a tr-type G domain in the interval 8–291 (ELYRNIGIVA…AVIDYLPAPS (284 aa)). GTP-binding positions include 17–24 (AHVDAGKT), 89–93 (DTPGH), and 143–146 (NKMD). The disordered stretch occupies residues 293 to 314 (IPAIRGTDPDDEEKHDERHADD).

Belongs to the TRAFAC class translation factor GTPase superfamily. Classic translation factor GTPase family. EF-G/EF-2 subfamily.

The protein localises to the cytoplasm. Catalyzes the GTP-dependent ribosomal translocation step during translation elongation. During this step, the ribosome changes from the pre-translocational (PRE) to the post-translocational (POST) state as the newly formed A-site-bound peptidyl-tRNA and P-site-bound deacylated tRNA move to the P and E sites, respectively. Catalyzes the coordinated movement of the two tRNA molecules, the mRNA and conformational changes in the ribosome. In Pseudomonas aeruginosa (strain ATCC 15692 / DSM 22644 / CIP 104116 / JCM 14847 / LMG 12228 / 1C / PRS 101 / PAO1), this protein is Elongation factor G 2 (fusB).